The following is a 264-amino-acid chain: 3-methyl-2-oxobutanoate hydroxymethyltransferase (264 aa).

Positions 45 and 84 each coordinate Mg(2+). Residues 45–46 (DS), D84, and K112 each bind 3-methyl-2-oxobutanoate. E114 lines the Mg(2+) pocket. E181 functions as the Proton acceptor in the catalytic mechanism.

The protein belongs to the PanB family. As to quaternary structure, homodecamer; pentamer of dimers. Mg(2+) is required as a cofactor.

It localises to the cytoplasm. It carries out the reaction 3-methyl-2-oxobutanoate + (6R)-5,10-methylene-5,6,7,8-tetrahydrofolate + H2O = 2-dehydropantoate + (6S)-5,6,7,8-tetrahydrofolate. The protein operates within cofactor biosynthesis; (R)-pantothenate biosynthesis; (R)-pantoate from 3-methyl-2-oxobutanoate: step 1/2. Its function is as follows. Catalyzes the reversible reaction in which hydroxymethyl group from 5,10-methylenetetrahydrofolate is transferred onto alpha-ketoisovalerate to form ketopantoate. The polypeptide is 3-methyl-2-oxobutanoate hydroxymethyltransferase (Escherichia coli O8 (strain IAI1)).